Reading from the N-terminus, the 349-residue chain is MSLPDFTMRSLLDAGAHFGHQSHRWNPKMEPFIFGTRNNIHIIDLAQTVPLLHQALKAVSDTVARGGRVLFVGTKRQAQDAIADAAHRSAQYYINSRWLGGMLTNWKTISASIQRLRKVEETLQGGGSGLTKKERLMMSRERDKLEKALGGIKEMGGIPDLIFVIDTNKEQLAIKEAERLHIPVAAILDTNCNPDGITFPIPGNDDAGRAIALYCDLIARAALDGIARGQGAGGVDFGEADQPPAEDLPAADLPAETPEPTTAVTEAYEAPAEAFELLTAPRGAPDDLGKLPGIGPQIVKKLNDAGLYHFWQIAAMTPEDAAKTDHDLKLGGRIERDGWVNVARSLVAA.

It belongs to the universal ribosomal protein uS2 family.

In Methylocella silvestris (strain DSM 15510 / CIP 108128 / LMG 27833 / NCIMB 13906 / BL2), this protein is Small ribosomal subunit protein uS2.